A 920-amino-acid chain; its full sequence is B3 domain-containing protein REM17 (920 aa).

3 consecutive DNA-binding regions (TF-B3) follow at residues 12 to 105 (NPHF…LGPS), 153 to 250 (RFVA…CRAK), and 267 to 361 (CFEG…LCPT). 3 disordered regions span residues 405–438 (DDDQTNIGNSSRKKRVSKNPREKVESSSDHSSFV), 540–562 (LACSEGNKSEESEEEGTEDKNTS), and 585–614 (DDDQTNIGNSSKEKRVKKNPVKKAESSSDH). Residues 423-432 (NPREKVESSS) are compositionally biased toward basic and acidic residues. The TF-B3 4 DNA-binding region spans 436 to 531 (SFVGSVNPSS…NKPVLSLCPT (96 aa)). DNA-binding regions (TF-B3) lie at residues 616–714 (SFVA…SLSE) and 727–823 (YFVG…LCPA). A compositionally biased stretch (low complexity) spans 842-852 (NSLSSNPSSGD). The interval 842-870 (NSLSSNPSSGDDSSRSEESEEENMEDKNI) is disordered.

It is found in the nucleus. The protein is B3 domain-containing protein REM17 (REM17) of Arabidopsis thaliana (Mouse-ear cress).